A 264-amino-acid chain; its full sequence is Acyl-[acyl-carrier-protein]--UDP-N-acetylglucosamine O-acyltransferase (264 aa).

The protein belongs to the transferase hexapeptide repeat family. LpxA subfamily. As to quaternary structure, homotrimer.

It is found in the cytoplasm. The catalysed reaction is a (3R)-hydroxyacyl-[ACP] + UDP-N-acetyl-alpha-D-glucosamine = a UDP-3-O-[(3R)-3-hydroxyacyl]-N-acetyl-alpha-D-glucosamine + holo-[ACP]. It functions in the pathway glycolipid biosynthesis; lipid IV(A) biosynthesis; lipid IV(A) from (3R)-3-hydroxytetradecanoyl-[acyl-carrier-protein] and UDP-N-acetyl-alpha-D-glucosamine: step 1/6. Its function is as follows. Involved in the biosynthesis of lipid A, a phosphorylated glycolipid that anchors the lipopolysaccharide to the outer membrane of the cell. The sequence is that of Acyl-[acyl-carrier-protein]--UDP-N-acetylglucosamine O-acyltransferase from Rickettsia rickettsii.